Consider the following 278-residue polypeptide: 4-deoxy-L-threo-5-hexosulose-uronate ketol-isomerase (278 aa).

Positions 196, 198, 203, and 245 each coordinate Zn(2+).

Belongs to the KduI family. As to quaternary structure, homohexamer. Zn(2+) serves as cofactor.

It catalyses the reaction 5-dehydro-4-deoxy-D-glucuronate = 3-deoxy-D-glycero-2,5-hexodiulosonate. It participates in glycan metabolism; pectin degradation; 2-dehydro-3-deoxy-D-gluconate from pectin: step 4/5. Its function is as follows. Catalyzes the isomerization of 5-dehydro-4-deoxy-D-glucuronate to 3-deoxy-D-glycero-2,5-hexodiulosonate. In Escherichia coli (strain K12 / MC4100 / BW2952), this protein is 4-deoxy-L-threo-5-hexosulose-uronate ketol-isomerase.